A 56-amino-acid polypeptide reads, in one-letter code: Conotoxin Cal6.41c (56 aa).

Positions 1–23 (MSGSGAMLLGLLILVAMATSLDT) are cleaved as a signal peptide. Cystine bridges form between Cys-27–Cys-41, Cys-33–Cys-50, and Cys-40–Cys-54.

As to expression, expressed by the venom duct.

The protein resides in the secreted. In terms of biological role, probable neurotoxin. This Californiconus californicus (California cone) protein is Conotoxin Cal6.41c.